A 450-amino-acid polypeptide reads, in one-letter code: Exodeoxyribonuclease 7 large subunit (450 aa).

Belongs to the XseA family. Heterooligomer composed of large and small subunits.

The protein localises to the cytoplasm. It carries out the reaction Exonucleolytic cleavage in either 5'- to 3'- or 3'- to 5'-direction to yield nucleoside 5'-phosphates.. Functionally, bidirectionally degrades single-stranded DNA into large acid-insoluble oligonucleotides, which are then degraded further into small acid-soluble oligonucleotides. This is Exodeoxyribonuclease 7 large subunit from Shewanella frigidimarina (strain NCIMB 400).